Here is a 171-residue protein sequence, read N- to C-terminus: MPLLDSFAVDHTRMQAPAVRGAKTMNTPHGDAITVFDLRFCIPNKEVMPEKGIHTLEHLFAGFMRDHLNGNGVEIIDISPMGCRTGFYMSLIGTPDEQRVADAWKAAMADVLKVQDQNQIPELNVYQCGTYQMHSLSEAQDIARHILERDVRVNSNKELALPKEKLQELHI.

The Fe cation site is built by histidine 54, histidine 58, and cysteine 128.

It belongs to the LuxS family. As to quaternary structure, homodimer. Fe cation is required as a cofactor.

It catalyses the reaction S-(5-deoxy-D-ribos-5-yl)-L-homocysteine = (S)-4,5-dihydroxypentane-2,3-dione + L-homocysteine. Functionally, involved in the synthesis of autoinducer 2 (AI-2) which is secreted by bacteria and is used to communicate both the cell density and the metabolic potential of the environment. The regulation of gene expression in response to changes in cell density is called quorum sensing. Catalyzes the transformation of S-ribosylhomocysteine (RHC) to homocysteine (HC) and 4,5-dihydroxy-2,3-pentadione (DPD). The sequence is that of S-ribosylhomocysteine lyase from Salmonella typhi.